The primary structure comprises 162 residues: Dihydrofolate reductase type 3 (162 aa).

The DHFR domain maps to 2 to 160 (LISLIAALAH…YACEFVTLSR (159 aa)).

Belongs to the dihydrofolate reductase family. Monomer.

The catalysed reaction is (6S)-5,6,7,8-tetrahydrofolate + NADP(+) = 7,8-dihydrofolate + NADPH + H(+). It participates in cofactor biosynthesis; tetrahydrofolate biosynthesis; 5,6,7,8-tetrahydrofolate from 7,8-dihydrofolate: step 1/1. Its function is as follows. Key enzyme in folate metabolism. Catalyzes an essential reaction for de novo glycine and purine synthesis, and for DNA precursor synthesis. The chain is Dihydrofolate reductase type 3 (dhfrIII) from Salmonella typhimurium.